A 556-amino-acid polypeptide reads, in one-letter code: Large cysteine-rich periplasmic protein OmcB (556 aa).

The N-terminal stretch at 1–22 (MSKLIRRVVTVLALTSMASCFA) is a signal peptide. Residues 23–40 (SGGIEAAVAESLITKIVA) constitute a propeptide that is removed on maturation.

Part of a disulfide cross-linked outer membrane complex (COMC) composed of the major outer membrane porin (MOMP), the small cysteine-rich protein (OmcA) and the large cysteine-rich periplasmic protein (OmcB).

It is found in the periplasm. Its function is as follows. In elementary bodies (EBs, the infectious stage, which is able to survive outside the host cell) provides the structural integrity of the outer envelope through disulfide cross-links with the small cysteine-rich protein and the major outer membrane porin. It has been described in publications as the Sarkosyl-insoluble COMC (Chlamydia outer membrane complex), and serves as the functional equivalent of peptidoglycan. This chain is Large cysteine-rich periplasmic protein OmcB (omcB), found in Chlamydia pneumoniae (Chlamydophila pneumoniae).